A 181-amino-acid chain; its full sequence is RNA pyrophosphohydrolase (181 aa).

The Nudix hydrolase domain occupies Gly6–Gln149. A Nudix box motif is present at residues Gly38–Gly59. Residues Gly159–Ala181 are disordered. The span at Arg168 to Ala181 shows a compositional bias: basic residues.

The protein belongs to the Nudix hydrolase family. RppH subfamily. The cofactor is a divalent metal cation.

Its function is as follows. Accelerates the degradation of transcripts by removing pyrophosphate from the 5'-end of triphosphorylated RNA, leading to a more labile monophosphorylated state that can stimulate subsequent ribonuclease cleavage. The polypeptide is RNA pyrophosphohydrolase (Alkalilimnicola ehrlichii (strain ATCC BAA-1101 / DSM 17681 / MLHE-1)).